A 1039-amino-acid polypeptide reads, in one-letter code: Error-prone DNA polymerase (1039 aa).

The protein belongs to the DNA polymerase type-C family. DnaE2 subfamily.

Its subcellular location is the cytoplasm. It catalyses the reaction DNA(n) + a 2'-deoxyribonucleoside 5'-triphosphate = DNA(n+1) + diphosphate. Functionally, DNA polymerase involved in damage-induced mutagenesis and translesion synthesis (TLS). It is not the major replicative DNA polymerase. The protein is Error-prone DNA polymerase of Idiomarina loihiensis (strain ATCC BAA-735 / DSM 15497 / L2-TR).